Reading from the N-terminus, the 61-residue chain is uncharacterized protein (61 aa).

Transmembrane regions (helical) follow at residues 4–24 (IIAFIWTFLLSHMACYLVASM) and 34–54 (SSVIAVVLYVLIMVLAEIMPM).

Its subcellular location is the cell membrane. This is an uncharacterized protein from Bacillus subtilis (strain 168).